A 448-amino-acid polypeptide reads, in one-letter code: UDP-N-acetylmuramoyl-L-alanine--L-glutamate ligase (448 aa).

118-124 (GSKGKST) lines the ATP pocket.

This sequence belongs to the MurCDEF family. MurD2 subfamily.

It is found in the cytoplasm. It catalyses the reaction UDP-N-acetyl-alpha-D-muramoyl-L-alanine + L-glutamate + ATP = UDP-N-acetyl-alpha-D-muramoyl-L-alanyl-L-glutamate + ADP + phosphate + H(+). The protein operates within cell wall biogenesis; peptidoglycan biosynthesis. Cell wall formation. Catalyzes the addition of L-glutamate to the nucleotide precursor UDP-N-acetylmuramoyl-L-alanine. This Salinispora tropica (strain ATCC BAA-916 / DSM 44818 / JCM 13857 / NBRC 105044 / CNB-440) protein is UDP-N-acetylmuramoyl-L-alanine--L-glutamate ligase.